The primary structure comprises 928 residues: Sodium/calcium exchanger 3 (928 aa).

The first 30 residues, 1-30, serve as a signal peptide directing secretion; the sequence is MAWLRLQPLTSAFLHFGLVTFVLFLNCLRA. At 31–73 the chain is on the extracellular side; that stretch reads EAGDSGDVPSAGQNNESCSGSSDCKEGVILPIWYPENPSLGDK. N-linked (GlcNAc...) asparagine glycosylation occurs at Asn45. A helical membrane pass occupies residues 74-94; sequence IARVIVYFVALIYMFLGVSII. Over 95–147 the chain is Cytoplasmic; that stretch reads ADRFMASIEVITSQEREVTIKKPNGETSTTTIRVWNETVSNLTLMALGSSAPE. Residues 148–168 traverse the membrane as a helical segment; the sequence is ILLSLIEVCGHGFIAGDLGPS. Position 169 (Thr169) is a topological domain, extracellular. Residues 170-190 form a helical membrane-spanning segment; the sequence is IVGSAAFNMFIIIGICVYVIP. Topologically, residues 191-201 are cytoplasmic; sequence DGETRKIKHLR. Residues 202-222 traverse the membrane as a helical segment; the sequence is VFFVTAAWSIFAYIWLYMILA. At 223–230 the chain is on the extracellular side; sequence VFSPGVVQ. Residues 231 to 251 traverse the membrane as a helical segment; that stretch reads VWEGLLTLFFFPVCVLLAWVA. Topologically, residues 252–727 are cytoplasmic; that stretch reads DKRLLFYKYM…DESGEERLPS (476 aa). Residues 253–272 form a putative calmodulin-binding region region; it reads KRLLFYKYMHKKYRTDKHRG. Calx-beta domains are found at residues 390–485 and 519–618; these read EPED…VRLS and ATVT…VIEM. Residues Glu409, Asp445, Asp470, Asp471, Ile473, Glu475, Glu478, Asp525, Asp526, Asp527, Glu543, Asp579, Asp605, and Glu673 each contribute to the Ca(2+) site. Residues 728-748 traverse the membrane as a helical segment; the sequence is CFDYVMHFLTVFWKVLFACVP. The Extracellular segment spans residues 749–755; that stretch reads PTEYCHG. A helical membrane pass occupies residues 756 to 776; it reads WACFVVSILIIGMLTAIIGDL. Topologically, residues 777 to 779 are cytoplasmic; sequence ASH. Residues 780-800 traverse the membrane as a helical segment; that stretch reads FGCTIGLKDSVTAVVFVAFGT. Residues 801–829 are Extracellular-facing; the sequence is SVPDTFASKAAALQDVYADASIGNVTGSN. A glycan (N-linked (GlcNAc...) asparagine) is linked at Asn824. Residues 830–850 traverse the membrane as a helical segment; the sequence is AVNVFLGIGLAWSVAAIYWAM. Residues 851 to 861 lie on the Cytoplasmic side of the membrane; the sequence is QGQEFHVSAGT. Residues 862–882 form a helical membrane-spanning segment; it reads LAFSVTLFTIFAFVCLSVLLY. Residues 883-904 lie on the Extracellular side of the membrane; it reads RRRPHLGGELGGPRGCKLATTW. A helical transmembrane segment spans residues 905 to 925; the sequence is LFVSLWLLYILFATLEAYCYI. Topologically, residues 926 to 928 are cytoplasmic; that stretch reads KGF.

The protein belongs to the Ca(2+):cation antiporter (CaCA) (TC 2.A.19) family. SLC8 subfamily. In terms of assembly, interacts with AKAP1. As to expression, detected in gray and white matter in the spinal cord. Detected in hippocampus neurons. Detected in brain cortex neurons. Detected in skeletal muscle (at protein level). Isoform 1 and isoform 2 are highly expressed in brain; levels are higher for isoform 2. Isoform 1 and isoform 2 are detected in soleus muscle; levels are higher for isoform 1. Detected in gastrocnemius muscle.

It is found in the cell membrane. It localises to the perikaryon. Its subcellular location is the cell projection. The protein localises to the dendrite. The protein resides in the dendritic spine. It is found in the sarcolemma. It localises to the cytoplasm. Its subcellular location is the sarcoplasm. The protein localises to the cell junction. The protein resides in the mitochondrion outer membrane. It is found in the perinuclear region. It localises to the endoplasmic reticulum membrane. It catalyses the reaction Ca(2+)(in) + 3 Na(+)(out) = Ca(2+)(out) + 3 Na(+)(in). Calcium transport is stimulated by cytoplasmic Ca(2+) and is inhibited by Na(+). Isoform 1 is more sensitive to stimulation by Ca(2+) than isoform 2. Isoform 2 is more sensitive to inactivation by Na(+). In terms of biological role, mediates the electrogenic exchange of Ca(2+) against Na(+) ions across the cell membrane, and thereby contributes to the regulation of cytoplasmic Ca(2+) levels and Ca(2+)-dependent cellular processes. Contributes to cellular Ca(2+) homeostasis in excitable cells, both in muscle and in brain. In a first phase, voltage-gated channels mediate the rapid increase of cytoplasmic Ca(2+) levels due to release of Ca(2+) stores from the endoplasmic reticulum. SLC8A3 mediates the export of Ca(2+) from the cell during the next phase, so that cytoplasmic Ca(2+) levels rapidly return to baseline. Contributes to Ca(2+) transport during excitation-contraction coupling in muscle. In neurons, contributes to the rapid decrease of cytoplasmic Ca(2+) levels back to baseline after neuronal activation, and thereby contributes to modulate synaptic plasticity, learning and memory. Required for normal oligodendrocyte differentiation and for normal myelination. Mediates Ca(2+) efflux from mitochondria and contributes to mitochondrial Ca(2+) ion homeostasis. Isoform 1 displays higher calcium exchanger activity than isoform 2, probably because isoform 1 has a lower threshold for activation by cytoplasmic Ca(2+). This is Sodium/calcium exchanger 3 from Mus musculus (Mouse).